A 228-amino-acid chain; its full sequence is Calcyclin-binding protein (228 aa).

Met-1 bears the N-acetylmethionine mark. Ala-2 carries the post-translational modification N-acetylalanine. The segment at 2–80 (ASEELQKDLE…YTVKISNYGW (79 aa)) is interaction with SIAH1. Residue Ser-3 is modified to Phosphoserine. N6-acetyllysine occurs at positions 8 and 19. A Phosphoserine modification is found at Ser-34. Positions 73–167 (VKISNYGWDQ…VENTRWDYLT (95 aa)) constitute a CS domain. The interaction with SKP1 stretch occupies residues 73 to 228 (VKISNYGWDQ…EKQAKGDTEF (156 aa)). An N6-acetyllysine mark is found at Lys-85 and Lys-118. Residues 154–228 (CRKKVENTRW…EKQAKGDTEF (75 aa)) form an interaction with S100A6 region. The region spanning 168 to 228 (QVEKECKEKE…EKQAKGDTEF (61 aa)) is the SGS domain.

In terms of assembly, homodimer. Interacts with proteins of the S100 family S100A1, S100A6, S100B, S100P and S100A12 in a calcium-dependent manner. Component of some large E3 complex at least composed of UBE2D1, SIAH1, CACYBP/SIP, SKP1, APC and TBL1X. Interacts directly with SIAH1, SIAH2 and SKP1. In terms of processing, phosphorylated on serine residues. Phosphorylated upon induction by RA or at high calcium concentrations.

Its subcellular location is the nucleus. The protein localises to the cytoplasm. Functionally, may be involved in calcium-dependent ubiquitination and subsequent proteasomal degradation of target proteins. Probably serves as a molecular bridge in ubiquitin E3 complexes. Participates in the ubiquitin-mediated degradation of beta-catenin (CTNNB1). The protein is Calcyclin-binding protein (CACYBP) of Homo sapiens (Human).